Reading from the N-terminus, the 270-residue chain is S-adenosylmethionine decarboxylase proenzyme (270 aa).

Residue Ser117 is the Schiff-base intermediate with substrate; via pyruvic acid of the active site. Position 117 is a pyruvic acid (Ser); by autocatalysis (Ser117). His122 serves as the catalytic Proton acceptor; for processing activity. The active-site Proton donor; for catalytic activity is the Cys145.

Belongs to the prokaryotic AdoMetDC family. Type 2 subfamily. Heterooctamer of four alpha and four beta chains arranged as a tetramer of alpha/beta heterodimers. Pyruvate serves as cofactor. In terms of processing, is synthesized initially as an inactive proenzyme. Formation of the active enzyme involves a self-maturation process in which the active site pyruvoyl group is generated from an internal serine residue via an autocatalytic post-translational modification. Two non-identical subunits are generated from the proenzyme in this reaction, and the pyruvate is formed at the N-terminus of the alpha chain, which is derived from the carboxyl end of the proenzyme. The post-translation cleavage follows an unusual pathway, termed non-hydrolytic serinolysis, in which the side chain hydroxyl group of the serine supplies its oxygen atom to form the C-terminus of the beta chain, while the remainder of the serine residue undergoes an oxidative deamination to produce ammonia and the pyruvoyl group blocking the N-terminus of the alpha chain.

It catalyses the reaction S-adenosyl-L-methionine + H(+) = S-adenosyl 3-(methylsulfanyl)propylamine + CO2. The protein operates within amine and polyamine biosynthesis; S-adenosylmethioninamine biosynthesis; S-adenosylmethioninamine from S-adenosyl-L-methionine: step 1/1. Functionally, catalyzes the decarboxylation of S-adenosylmethionine to S-adenosylmethioninamine (dcAdoMet), the propylamine donor required for the synthesis of the polyamines spermine and spermidine from the diamine putrescine. The protein is S-adenosylmethionine decarboxylase proenzyme of Pseudoalteromonas translucida (strain TAC 125).